The primary structure comprises 847 residues: DNA gyrase subunit A (847 aa).

Residues 34–533 form the Topo IIA-type catalytic domain; the sequence is LPDVRDGLKP…NYSDINTSDL (500 aa). Tyrosine 122 acts as the O-(5'-phospho-DNA)-tyrosine intermediate in catalysis. The GyrA-box motif lies at 560–566; the sequence is QKRGGKG.

Belongs to the type II topoisomerase GyrA/ParC subunit family. As to quaternary structure, heterotetramer, composed of two GyrA and two GyrB chains. In the heterotetramer, GyrA contains the active site tyrosine that forms a transient covalent intermediate with DNA, while GyrB binds cofactors and catalyzes ATP hydrolysis.

It is found in the cytoplasm. It carries out the reaction ATP-dependent breakage, passage and rejoining of double-stranded DNA.. A type II topoisomerase that negatively supercoils closed circular double-stranded (ds) DNA in an ATP-dependent manner to modulate DNA topology and maintain chromosomes in an underwound state. Negative supercoiling favors strand separation, and DNA replication, transcription, recombination and repair, all of which involve strand separation. Also able to catalyze the interconversion of other topological isomers of dsDNA rings, including catenanes and knotted rings. Type II topoisomerases break and join 2 DNA strands simultaneously in an ATP-dependent manner. This chain is DNA gyrase subunit A, found in Buchnera aphidicola subsp. Baizongia pistaciae (strain Bp).